Here is a 583-residue protein sequence, read N- to C-terminus: Cysteine/serine-rich nuclear protein 1 (583 aa).

2 disordered regions span residues 1–79 (MTGL…APRE) and 306–381 (AESL…RSGV). Residues 18–41 (SSSSSSSFSSRLSLSSFPASSASP) are compositionally biased toward low complexity. Positions 54–69 (APQSDQDSCGLQSFTP) are enriched in polar residues. Residues 335 to 361 (PVSSELGDSSCSSDMTDSSTTLSSGSS) show a composition bias toward low complexity. Residues 364–373 (PNHPAHPSLP) show a composition bias toward pro residues.

The protein belongs to the AXUD1 family. In terms of tissue distribution, widely expressed with highest levels in thymus and lung. Low levels detected in naive T-cells.

It localises to the nucleus. Its function is as follows. Binds to the consensus sequence 5'-AGAGTG-3' and has transcriptional activator activity. May have a tumor-suppressor function. May play a role in apoptosis. The sequence is that of Cysteine/serine-rich nuclear protein 1 (Csrnp1) from Mus musculus (Mouse).